Consider the following 321-residue polypeptide: Annexin D3 (321 aa).

Ala-2 bears the N-acetylalanine mark. Annexin repeat units follow at residues 11-82 (PSPA…SWTY), 83-159 (DPAE…TLAS), 171-243 (EVAT…VAIF), and 247-318 (TPEK…TLLG). The Ca(2+) site is built by Gly-26, Gly-28, and Glu-68. Thr-117 is subject to Phosphothreonine. Residues Ile-260 and Gly-264 each coordinate Ca(2+). Position 289 is a phosphotyrosine (Tyr-289). Asp-304 serves as a coordination point for Ca(2+).

The protein belongs to the annexin (TC 1.A.31.1) family. As to expression, expressed mainly in roots and flowers. Lower in stems and leaves.

The protein is Annexin D3 (ANN3) of Arabidopsis thaliana (Mouse-ear cress).